We begin with the raw amino-acid sequence, 184 residues long: ATP synthase subunit delta (184 aa).

The protein belongs to the ATPase delta chain family. F-type ATPases have 2 components, F(1) - the catalytic core - and F(0) - the membrane proton channel. F(1) has five subunits: alpha(3), beta(3), gamma(1), delta(1), epsilon(1). CF(0) has four main subunits: a(1), b(1), b'(1) and c(10-14). The alpha and beta chains form an alternating ring which encloses part of the gamma chain. F(1) is attached to F(0) by a central stalk formed by the gamma and epsilon chains, while a peripheral stalk is formed by the delta, b and b' chains.

The protein resides in the cellular thylakoid membrane. Its function is as follows. F(1)F(0) ATP synthase produces ATP from ADP in the presence of a proton or sodium gradient. F-type ATPases consist of two structural domains, F(1) containing the extramembraneous catalytic core and F(0) containing the membrane proton channel, linked together by a central stalk and a peripheral stalk. During catalysis, ATP synthesis in the catalytic domain of F(1) is coupled via a rotary mechanism of the central stalk subunits to proton translocation. Functionally, this protein is part of the stalk that links CF(0) to CF(1). It either transmits conformational changes from CF(0) to CF(1) or is implicated in proton conduction. This Nostoc punctiforme (strain ATCC 29133 / PCC 73102) protein is ATP synthase subunit delta.